We begin with the raw amino-acid sequence, 201 residues long: Probable GTP-binding protein EngB (201 aa).

An EngB-type G domain is found at 22–195 (TQPEFAFAGK…WRCIEQFLEV (174 aa)). Residues 30–37 (GKSNVGKS), 57–61 (GKTQT), 75–78 (DLPG), 142–145 (TKLD), and 174–176 (FSS) contribute to the GTP site. Residues Ser37 and Thr59 each coordinate Mg(2+).

This sequence belongs to the TRAFAC class TrmE-Era-EngA-EngB-Septin-like GTPase superfamily. EngB GTPase family. Mg(2+) is required as a cofactor.

Necessary for normal cell division and for the maintenance of normal septation. In Lachnoclostridium phytofermentans (strain ATCC 700394 / DSM 18823 / ISDg) (Clostridium phytofermentans), this protein is Probable GTP-binding protein EngB.